The primary structure comprises 427 residues: Glutamate-1-semialdehyde 2,1-aminomutase (427 aa).

Position 265 is an N6-(pyridoxal phosphate)lysine (K265).

This sequence belongs to the class-III pyridoxal-phosphate-dependent aminotransferase family. HemL subfamily. In terms of assembly, homodimer. Pyridoxal 5'-phosphate is required as a cofactor.

The protein resides in the cytoplasm. It carries out the reaction (S)-4-amino-5-oxopentanoate = 5-aminolevulinate. It functions in the pathway porphyrin-containing compound metabolism; protoporphyrin-IX biosynthesis; 5-aminolevulinate from L-glutamyl-tRNA(Glu): step 2/2. The sequence is that of Glutamate-1-semialdehyde 2,1-aminomutase from Pseudomonas paraeruginosa (strain DSM 24068 / PA7) (Pseudomonas aeruginosa (strain PA7)).